The primary structure comprises 181 residues: MDTNIMGFARALVDLAHEEDKVHLFYDNLKVVFDLVKENQDLMSLMNSQVLSKNQKHEIIDVVFKDHLTQTIVDFLKVVIDNREFFHIKSIIKKFFRMIEEEEHTIFINVVSAHELNDDQKAQLVEKLHKKFASQVKILYQTDPSLIAGIRIQSNDLLIDNSIDGKLKLLKHQLRTFSKEN.

This sequence belongs to the ATPase delta chain family. As to quaternary structure, F-type ATPases have 2 components, F(1) - the catalytic core - and F(0) - the membrane proton channel. F(1) has five subunits: alpha(3), beta(3), gamma(1), delta(1), epsilon(1). F(0) has three main subunits: a(1), b(2) and c(10-14). The alpha and beta chains form an alternating ring which encloses part of the gamma chain. F(1) is attached to F(0) by a central stalk formed by the gamma and epsilon chains, while a peripheral stalk is formed by the delta and b chains.

It is found in the cell membrane. F(1)F(0) ATP synthase produces ATP from ADP in the presence of a proton or sodium gradient. F-type ATPases consist of two structural domains, F(1) containing the extramembraneous catalytic core and F(0) containing the membrane proton channel, linked together by a central stalk and a peripheral stalk. During catalysis, ATP synthesis in the catalytic domain of F(1) is coupled via a rotary mechanism of the central stalk subunits to proton translocation. Functionally, this protein is part of the stalk that links CF(0) to CF(1). It either transmits conformational changes from CF(0) to CF(1) or is implicated in proton conduction. The chain is ATP synthase subunit delta from Mycoplasmoides gallisepticum (strain R(low / passage 15 / clone 2)) (Mycoplasma gallisepticum).